Consider the following 173-residue polypeptide: Peptide deformylase (173 aa).

Fe cation-binding residues include Cys91 and His133. Glu134 is a catalytic residue. His137 serves as a coordination point for Fe cation.

Belongs to the polypeptide deformylase family. The cofactor is Fe(2+).

It carries out the reaction N-terminal N-formyl-L-methionyl-[peptide] + H2O = N-terminal L-methionyl-[peptide] + formate. Removes the formyl group from the N-terminal Met of newly synthesized proteins. Requires at least a dipeptide for an efficient rate of reaction. N-terminal L-methionine is a prerequisite for activity but the enzyme has broad specificity at other positions. In Buchnera aphidicola subsp. Acyrthosiphon pisum (strain 5A), this protein is Peptide deformylase.